Here is a 95-residue protein sequence, read N- to C-terminus: MNLKPLNDRVLVKRLESEEKTAGGLFIPDTAKEKPSRGEVVAAGPGKVAEDGKLIAMTVKKGDTVLFSKYAGTEIKLDGVEHLVMREDDILAIIE.

This sequence belongs to the GroES chaperonin family. As to quaternary structure, heptamer of 7 subunits arranged in a ring. Interacts with the chaperonin GroEL.

The protein resides in the cytoplasm. Together with the chaperonin GroEL, plays an essential role in assisting protein folding. The GroEL-GroES system forms a nano-cage that allows encapsulation of the non-native substrate proteins and provides a physical environment optimized to promote and accelerate protein folding. GroES binds to the apical surface of the GroEL ring, thereby capping the opening of the GroEL channel. In Nitratidesulfovibrio vulgaris (strain DSM 19637 / Miyazaki F) (Desulfovibrio vulgaris), this protein is Co-chaperonin GroES.